A 102-amino-acid polypeptide reads, in one-letter code: UPF0213 protein XAC3202 (102 aa).

Residues 5–80 (KPWHLYLLLC…KRLPRARKLA (76 aa)) form the GIY-YIG domain.

The protein belongs to the UPF0213 family.

This Xanthomonas axonopodis pv. citri (strain 306) protein is UPF0213 protein XAC3202.